We begin with the raw amino-acid sequence, 150 residues long: Ribonuclease H (150 aa).

Positions 1–142 (MSDSVELFTD…ADQLANRGVD (142 aa)) constitute an RNase H type-1 domain. Mg(2+) contacts are provided by D10, E48, D70, and D134.

It belongs to the RNase H family. Monomer. Requires Mg(2+) as cofactor.

The protein resides in the cytoplasm. The enzyme catalyses Endonucleolytic cleavage to 5'-phosphomonoester.. Endonuclease that specifically degrades the RNA of RNA-DNA hybrids. In Pseudomonas syringae pv. syringae (strain B728a), this protein is Ribonuclease H.